The following is an 874-amino-acid chain: Alanine--tRNA ligase (874 aa).

4 residues coordinate Zn(2+): His562, His566, Cys664, and His668.

This sequence belongs to the class-II aminoacyl-tRNA synthetase family. Requires Zn(2+) as cofactor.

Its subcellular location is the cytoplasm. It catalyses the reaction tRNA(Ala) + L-alanine + ATP = L-alanyl-tRNA(Ala) + AMP + diphosphate. Its function is as follows. Catalyzes the attachment of alanine to tRNA(Ala) in a two-step reaction: alanine is first activated by ATP to form Ala-AMP and then transferred to the acceptor end of tRNA(Ala). Also edits incorrectly charged Ser-tRNA(Ala) and Gly-tRNA(Ala) via its editing domain. In Neisseria gonorrhoeae (strain ATCC 700825 / FA 1090), this protein is Alanine--tRNA ligase.